A 421-amino-acid polypeptide reads, in one-letter code: Gamma-glutamyl phosphate reductase (421 aa).

It belongs to the gamma-glutamyl phosphate reductase family.

The protein localises to the cytoplasm. The catalysed reaction is L-glutamate 5-semialdehyde + phosphate + NADP(+) = L-glutamyl 5-phosphate + NADPH + H(+). The protein operates within amino-acid biosynthesis; L-proline biosynthesis; L-glutamate 5-semialdehyde from L-glutamate: step 2/2. Catalyzes the NADPH-dependent reduction of L-glutamate 5-phosphate into L-glutamate 5-semialdehyde and phosphate. The product spontaneously undergoes cyclization to form 1-pyrroline-5-carboxylate. In Brucella melitensis biotype 1 (strain ATCC 23456 / CCUG 17765 / NCTC 10094 / 16M), this protein is Gamma-glutamyl phosphate reductase.